The chain runs to 216 residues: Cytidylate kinase (216 aa).

7–15 (GPSGTGKST) lines the ATP pocket.

The protein belongs to the cytidylate kinase family. Type 1 subfamily.

It is found in the cytoplasm. The enzyme catalyses CMP + ATP = CDP + ADP. It catalyses the reaction dCMP + ATP = dCDP + ADP. In Chlamydia trachomatis serovar L2 (strain ATCC VR-902B / DSM 19102 / 434/Bu), this protein is Cytidylate kinase.